A 305-amino-acid chain; its full sequence is Methionyl-tRNA formyltransferase (305 aa).

A (6S)-5,6,7,8-tetrahydrofolate-binding site is contributed by 110-113; that stretch reads SLLP.

The protein belongs to the Fmt family.

It carries out the reaction L-methionyl-tRNA(fMet) + (6R)-10-formyltetrahydrofolate = N-formyl-L-methionyl-tRNA(fMet) + (6S)-5,6,7,8-tetrahydrofolate + H(+). Functionally, attaches a formyl group to the free amino group of methionyl-tRNA(fMet). The formyl group appears to play a dual role in the initiator identity of N-formylmethionyl-tRNA by promoting its recognition by IF2 and preventing the misappropriation of this tRNA by the elongation apparatus. The chain is Methionyl-tRNA formyltransferase from Gluconacetobacter diazotrophicus (strain ATCC 49037 / DSM 5601 / CCUG 37298 / CIP 103539 / LMG 7603 / PAl5).